The sequence spans 198 residues: KinB-signaling pathway activation protein (198 aa).

6 helical membrane passes run 9–29 (FFFS…FALK), 42–62 (AGQI…FSVI), 90–110 (LQLF…FLFF), 117–137 (LAGY…TAYI), 146–166 (TFVS…FPAL), and 173–193 (WLYL…LMLP).

The protein localises to the cell membrane. In terms of biological role, involved in the activation of the KinB signaling pathway of sporulation. The sequence is that of KinB-signaling pathway activation protein (kbaA) from Bacillus subtilis (strain 168).